A 101-amino-acid chain; its full sequence is Hg-scorpine-like-2 (101 aa).

Positions 1 to 17 (MKLTILILLVITSFCSC) are cleaved as a signal peptide. A BetaSPN-type CS-alpha/beta domain is found at 60-100 (QQLCMFNKDVAGWCEKSCQQSAHQKGYCHGTKCKCGIPLNY). Disulfide bonds link Cys-63-Cys-87, Cys-73-Cys-92, and Cys-77-Cys-94.

This sequence belongs to the long chain scorpion toxin family. Class 3 subfamily. As to expression, expressed by the venom gland.

The protein localises to the secreted. Inhibits voltage-gated potassium channels. This Hoffmannihadrurus gertschi (Scorpion) protein is Hg-scorpine-like-2.